Reading from the N-terminus, the 283-residue chain is D-alanine aminotransferase (283 aa).

Tyr-32 is a substrate binding site. Arg-51 provides a ligand contact to pyridoxal 5'-phosphate. Substrate contacts are provided by Arg-99 and His-101. Lys-146 functions as the Proton acceptor in the catalytic mechanism. Position 146 is an N6-(pyridoxal phosphate)lysine (Lys-146). Glu-178 provides a ligand contact to pyridoxal 5'-phosphate.

This sequence belongs to the class-IV pyridoxal-phosphate-dependent aminotransferase family. As to quaternary structure, homodimer. Pyridoxal 5'-phosphate is required as a cofactor.

The catalysed reaction is D-alanine + 2-oxoglutarate = D-glutamate + pyruvate. Its function is as follows. Acts on the D-isomers of alanine, leucine, aspartate, glutamate, aminobutyrate, norvaline and asparagine. The enzyme transfers an amino group from a substrate D-amino acid to the pyridoxal phosphate cofactor to form pyridoxamine and an alpha-keto acid in the first half-reaction. The second half-reaction is the reverse of the first, transferring the amino group from the pyridoxamine to a second alpha-keto acid to form the product D-amino acid via a ping-pong mechanism. This is an important process in the formation of D-alanine and D-glutamate, which are essential bacterial cell wall components. In Lysinibacillus sphaericus (Bacillus sphaericus), this protein is D-alanine aminotransferase (dat).